A 562-amino-acid chain; its full sequence is Dihydroxy-acid dehydratase (562 aa).

Mg(2+) is bound at residue aspartate 80. Residue cysteine 121 participates in [2Fe-2S] cluster binding. Aspartate 122 and lysine 123 together coordinate Mg(2+). Lysine 123 bears the N6-carboxylysine mark. A [2Fe-2S] cluster-binding site is contributed by cysteine 194. Glutamate 446 provides a ligand contact to Mg(2+). Serine 472 serves as the catalytic Proton acceptor.

It belongs to the IlvD/Edd family. In terms of assembly, homodimer. [2Fe-2S] cluster serves as cofactor. Requires Mg(2+) as cofactor.

It catalyses the reaction (2R)-2,3-dihydroxy-3-methylbutanoate = 3-methyl-2-oxobutanoate + H2O. The catalysed reaction is (2R,3R)-2,3-dihydroxy-3-methylpentanoate = (S)-3-methyl-2-oxopentanoate + H2O. The protein operates within amino-acid biosynthesis; L-isoleucine biosynthesis; L-isoleucine from 2-oxobutanoate: step 3/4. Its pathway is amino-acid biosynthesis; L-valine biosynthesis; L-valine from pyruvate: step 3/4. Its function is as follows. Functions in the biosynthesis of branched-chain amino acids. Catalyzes the dehydration of (2R,3R)-2,3-dihydroxy-3-methylpentanoate (2,3-dihydroxy-3-methylvalerate) into 2-oxo-3-methylpentanoate (2-oxo-3-methylvalerate) and of (2R)-2,3-dihydroxy-3-methylbutanoate (2,3-dihydroxyisovalerate) into 2-oxo-3-methylbutanoate (2-oxoisovalerate), the penultimate precursor to L-isoleucine and L-valine, respectively. This is Dihydroxy-acid dehydratase from Staphylococcus aureus (strain USA300 / TCH1516).